A 99-amino-acid polypeptide reads, in one-letter code: Aspartyl/glutamyl-tRNA(Asn/Gln) amidotransferase subunit C (99 aa).

It belongs to the GatC family. Heterotrimer of A, B and C subunits.

It carries out the reaction L-glutamyl-tRNA(Gln) + L-glutamine + ATP + H2O = L-glutaminyl-tRNA(Gln) + L-glutamate + ADP + phosphate + H(+). The catalysed reaction is L-aspartyl-tRNA(Asn) + L-glutamine + ATP + H2O = L-asparaginyl-tRNA(Asn) + L-glutamate + ADP + phosphate + 2 H(+). In terms of biological role, allows the formation of correctly charged Asn-tRNA(Asn) or Gln-tRNA(Gln) through the transamidation of misacylated Asp-tRNA(Asn) or Glu-tRNA(Gln) in organisms which lack either or both of asparaginyl-tRNA or glutaminyl-tRNA synthetases. The reaction takes place in the presence of glutamine and ATP through an activated phospho-Asp-tRNA(Asn) or phospho-Glu-tRNA(Gln). The polypeptide is Aspartyl/glutamyl-tRNA(Asn/Gln) amidotransferase subunit C (Polaromonas naphthalenivorans (strain CJ2)).